Here is a 175-residue protein sequence, read N- to C-terminus: Large ribosomal subunit protein uL10 (175 aa).

It belongs to the universal ribosomal protein uL10 family. In terms of assembly, part of the ribosomal stalk of the 50S ribosomal subunit. The N-terminus interacts with L11 and the large rRNA to form the base of the stalk. The C-terminus forms an elongated spine to which L12 dimers bind in a sequential fashion forming a multimeric L10(L12)X complex.

Forms part of the ribosomal stalk, playing a central role in the interaction of the ribosome with GTP-bound translation factors. The chain is Large ribosomal subunit protein uL10 from Cupriavidus taiwanensis (strain DSM 17343 / BCRC 17206 / CCUG 44338 / CIP 107171 / LMG 19424 / R1) (Ralstonia taiwanensis (strain LMG 19424)).